Here is a 205-residue protein sequence, read N- to C-terminus: MLRALSTLGARPLGRPPAQFLLLARGRKTRHDPPAKSKIGRVATPPAVDPAEFFVLTERYRQYRQTVRALRQEFVTEVRRKVHEARAGVLAERKALQDAAEHRELMAWNQAENQRLHELRMARLRQEAREQEQWQAEEAAREAREAEAWARLKEQEVLQLQEDAKNFITRENLEARVEEALDSPKSYNWAVTREGQVVTPQHKGS.

Residues 1–26 (MLRALSTLGARPLGRPPAQFLLLARG) constitute a mitochondrion transit peptide.

The protein belongs to the mitochondrion-specific ribosomal protein mS26 family. Component of the mitochondrial ribosome small subunit (28S) which comprises a 12S rRNA and about 30 distinct proteins.

The protein resides in the mitochondrion. This chain is Small ribosomal subunit protein mS26 (MRPS26), found in Bos taurus (Bovine).